Here is a 752-residue protein sequence, read N- to C-terminus: Photosystem I P700 chlorophyll a apoprotein A1 (752 aa).

8 helical membrane passes run 73–96, 159–182, 198–222, 294–312, 349–372, 388–414, 436–458, and 533–551; these read IFSA…FHGA, LYAT…FHYH, MNHH…HISI, TAHH…GHMY, WHAQ…HHMY, LSLF…IFMV, AIIS…LYIH, and FMVH…LILV. [4Fe-4S] cluster-binding residues include cysteine 575 and cysteine 584. The next 2 helical transmembrane spans lie at 591 to 612 and 666 to 688; these read HVFL…HFSW and LSAY…MFLF. Histidine 677 lines the chlorophyll a' pocket. Chlorophyll a is bound by residues methionine 685 and tyrosine 693. A phylloquinone-binding site is contributed by tryptophan 694. The helical transmembrane segment at 726–746 threads the bilayer; the sequence is AVGVAHYLLGGIGTTWAFFLA.

The protein belongs to the PsaA/PsaB family. The PsaA/B heterodimer binds the P700 chlorophyll special pair and subsequent electron acceptors. PSI consists of a core antenna complex that captures photons, and an electron transfer chain that converts photonic excitation into a charge separation. The eukaryotic PSI reaction center is composed of at least 11 subunits. It depends on P700 is a chlorophyll a/chlorophyll a' dimer, A0 is one or more chlorophyll a, A1 is one or both phylloquinones and FX is a shared 4Fe-4S iron-sulfur center. as a cofactor.

The protein localises to the plastid. The protein resides in the chloroplast thylakoid membrane. The catalysed reaction is reduced [plastocyanin] + hnu + oxidized [2Fe-2S]-[ferredoxin] = oxidized [plastocyanin] + reduced [2Fe-2S]-[ferredoxin]. Functionally, psaA and PsaB bind P700, the primary electron donor of photosystem I (PSI), as well as the electron acceptors A0, A1 and FX. PSI is a plastocyanin/cytochrome c6-ferredoxin oxidoreductase, converting photonic excitation into a charge separation, which transfers an electron from the donor P700 chlorophyll pair to the spectroscopically characterized acceptors A0, A1, FX, FA and FB in turn. Oxidized P700 is reduced on the lumenal side of the thylakoid membrane by plastocyanin or cytochrome c6. This is Photosystem I P700 chlorophyll a apoprotein A1 from Gracilaria tenuistipitata var. liui (Red alga).